We begin with the raw amino-acid sequence, 254 residues long: Serotonin N-acetyltransferase 1, chloroplastic (254 aa).

The transit peptide at 1–83 (MASAASASAS…NSTETVEPPS (83 aa)) directs the protein to the chloroplast. The N-acetyltransferase domain occupies 119–254 (VNVYDLQALC…IKGMFWYPRF (136 aa)).

The protein localises to the plastid. It localises to the chloroplast. It is found in the nucleus. The catalysed reaction is a 2-arylethylamine + acetyl-CoA = an N-acetyl-2-arylethylamine + CoA + H(+). Its pathway is aromatic compound metabolism; melatonin biosynthesis; melatonin from serotonin: step 1/2. In terms of biological role, catalyzes the N-acetylation of serotonin into N-acetylserotonin, the penultimate step in the synthesis of melatonin. Catalyzes in vitro the N-acetylation of tryptamine to produce N-acetyltryptamine, 5-methoxytryptamine to produce melatonin and tyramine to produce N-acetyltyramine. Acetyltransferase required for geminivirus infection and systemic spread. This chain is Serotonin N-acetyltransferase 1, chloroplastic, found in Oryza sativa subsp. indica (Rice).